The following is a 146-amino-acid chain: uncharacterized protein (146 aa).

The region spanning 7 to 146 (LQINYKTDEL…EGHDILIWNP (140 aa)) is the N-acetyltransferase domain.

This is an uncharacterized protein from Staphylococcus epidermidis (strain ATCC 35984 / DSM 28319 / BCRC 17069 / CCUG 31568 / BM 3577 / RP62A).